Consider the following 512-residue polypeptide: Alpha-amylase (512 aa).

The first 15 residues, 1 to 15, serve as a signal peptide directing secretion; it reads MKLFVLIALFGLGFA. 3 disulfide bridges follow: C43–C101, C85–C130, and C156–C175. 3 residues coordinate Ca(2+): N115, R173, and D182. Residue R210 coordinates chloride. Catalysis depends on D212, which acts as the Nucleophile. H216 provides a ligand contact to Ca(2+). Catalysis depends on E248, which acts as the Proton donor. R352 is a binding site for chloride. Intrachain disulfides connect C394–C400 and C466–C478. N496 is a glycosylation site (N-linked (GlcNAc...) asparagine).

This sequence belongs to the glycosyl hydrolase 13 family. Ca(2+) serves as cofactor. Chloride is required as a cofactor.

Its subcellular location is the secreted. The enzyme catalyses Endohydrolysis of (1-&gt;4)-alpha-D-glucosidic linkages in polysaccharides containing three or more (1-&gt;4)-alpha-linked D-glucose units.. Its function is as follows. Catalyzes the hydrolysis of alpha-1,4 glycosidic linkages in starch, glycogen and similar oligosaccharides. In Oryzias latipes (Japanese rice fish), this protein is Alpha-amylase.